We begin with the raw amino-acid sequence, 892 residues long: Inner centromere protein B (892 aa).

Disordered regions lie at residues 50–124 (AEPE…KRMT), 160–182 (EHER…EMKT), 255–286 (LVNE…SLVV), 305–470 (KRES…PPPH), 502–555 (KRNT…RRED), 569–687 (QLEE…RERE), 702–760 (ERAA…AAAA), and 797–819 (NYGM…KPIP). The segment covering 60 to 69 (SQKRRRKKRT) has biased composition (basic residues). The span at 90 to 99 (SANWSSSVRR) shows a compositional bias: low complexity. Residues 259–272 (QPLNLSNESATPTG) are compositionally biased toward polar residues. Residues 305–315 (KRESMTREAVR) show a composition bias toward basic and acidic residues. Basic residues predominate over residues 316–326 (KSIRQSISKKK). The segment covering 332 to 343 (SSTSSQRSCHSS) has biased composition (low complexity). Residues 431–444 (RAVDELSDDERPSE) show a composition bias toward basic and acidic residues. Positions 455-470 (PSPPCPPSKIVKPPPH) are enriched in pro residues. Composition is skewed to basic and acidic residues over residues 509–555 (PDPK…RRED), 569–602 (QLEE…EEKA), 609–687 (KKQE…RERE), and 702–754 (ERAA…KAKE). Residues 512 to 725 (KSEEKERQRL…EERKKREQQQ (214 aa)) are SAH. The tract at residues 802 to 876 (LNSDDSTDDE…RTSSAVWHSP (75 aa)) is IN box. Phosphoserine occurs at positions 869 and 870.

It belongs to the INCENP family. Component of the CPC at least composed of survivin/birc5, incenp, cdca8/borealin and/or cdca9/dasra-A, and aurkb/aurora-B. Interacts (via C-terminus) with aurkb (via N-terminus and kinase domain). Interacts (via N-terminus) with birc5.1, birc5.2, cdca8 and cdca9. Interacts with mtus1.

It localises to the nucleus. The protein localises to the chromosome. Its subcellular location is the centromere. It is found in the cytoplasm. The protein resides in the cytoskeleton. It localises to the spindle. The protein localises to the midbody. Its subcellular location is the kinetochore. Component of the chromosomal passenger complex (CPC), a complex that acts as a key regulator of mitosis. The CPC complex has essential functions at the centromere in ensuring correct chromosome alignment and segregation and is required for chromatin-induced microtubule stabilization and spindle assembly. Acts as a scaffold regulating CPC localization and activity. The C-terminus associates with aurkb/aurora-B, the N-terminus associated with cdca8/borealin and/or cdca9/dasra-A tethers the CPC to the inner centromere, and the microtubule binding activity within the central SAH domain directs aurkb/aurora-B toward substrates near microtubules. Activates aurkb. This is Inner centromere protein B (incenp-b) from Xenopus laevis (African clawed frog).